Consider the following 280-residue polypeptide: 4-diphosphocytidyl-2-C-methyl-D-erythritol kinase (280 aa).

Lysine 8 is an active-site residue. Residue 91–101 (PVSAGLAGGST) coordinates ATP. The active site involves aspartate 133.

This sequence belongs to the GHMP kinase family. IspE subfamily.

It carries out the reaction 4-CDP-2-C-methyl-D-erythritol + ATP = 4-CDP-2-C-methyl-D-erythritol 2-phosphate + ADP + H(+). It functions in the pathway isoprenoid biosynthesis; isopentenyl diphosphate biosynthesis via DXP pathway; isopentenyl diphosphate from 1-deoxy-D-xylulose 5-phosphate: step 3/6. Catalyzes the phosphorylation of the position 2 hydroxy group of 4-diphosphocytidyl-2C-methyl-D-erythritol. This is 4-diphosphocytidyl-2-C-methyl-D-erythritol kinase from Clostridium botulinum (strain Eklund 17B / Type B).